A 105-amino-acid chain; its full sequence is Phosphoribosyl-ATP pyrophosphatase (105 aa).

It belongs to the PRA-PH family.

Its subcellular location is the cytoplasm. The catalysed reaction is 1-(5-phospho-beta-D-ribosyl)-ATP + H2O = 1-(5-phospho-beta-D-ribosyl)-5'-AMP + diphosphate + H(+). The protein operates within amino-acid biosynthesis; L-histidine biosynthesis; L-histidine from 5-phospho-alpha-D-ribose 1-diphosphate: step 2/9. In Ruthia magnifica subsp. Calyptogena magnifica, this protein is Phosphoribosyl-ATP pyrophosphatase.